The following is a 299-amino-acid chain: tRNA pseudouridine synthase B (299 aa).

D38 (nucleophile) is an active-site residue.

It belongs to the pseudouridine synthase TruB family. Type 1 subfamily.

The catalysed reaction is uridine(55) in tRNA = pseudouridine(55) in tRNA. Its function is as follows. Responsible for synthesis of pseudouridine from uracil-55 in the psi GC loop of transfer RNAs. This Pediococcus pentosaceus (strain ATCC 25745 / CCUG 21536 / LMG 10740 / 183-1w) protein is tRNA pseudouridine synthase B.